We begin with the raw amino-acid sequence, 250 residues long: Small ribosomal subunit protein uS3 (250 aa).

Residues 16-85 (IDEYLEKELE…NPQIEVKEVS (70 aa)) form the KH type-2 domain.

Belongs to the universal ribosomal protein uS3 family. Part of the 30S ribosomal subunit.

Its function is as follows. Binds the lower part of the 30S subunit head. The polypeptide is Small ribosomal subunit protein uS3 (Methanobrevibacter smithii (strain ATCC 35061 / DSM 861 / OCM 144 / PS)).